A 604-amino-acid polypeptide reads, in one-letter code: Linalool synthase Tps-5042L13, chloroplastic (604 aa).

The transit peptide at 1–34 (MSSMRIYVAIMKKPSVKHVDNVDKKASKPSWRVS) directs the protein to the chloroplast. (2E)-geranyl diphosphate-binding residues include arginine 323, aspartate 360, aspartate 364, arginine 501, and aspartate 504. Residues aspartate 360 and aspartate 364 each coordinate Mg(2+). The DDXXD motif signature appears at 360–364 (DDVYD). Aspartate 504, threonine 508, and glutamate 512 together coordinate Mg(2+).

The protein belongs to the terpene synthase family. Tpsb subfamily. As to quaternary structure, monomer. Mg(2+) serves as cofactor. Requires Mn(2+) as cofactor.

It localises to the plastid. Its subcellular location is the chloroplast. The catalysed reaction is (2E)-geranyl diphosphate + H2O = linalool + diphosphate. Its pathway is secondary metabolite biosynthesis; terpenoid biosynthesis. Its function is as follows. Monoterpene synthase (mono-TPS) involved in the biosynthesis of monoterpenes natural products. Catalyzes the conversion of (2E)-geranyl diphosphate (GPP) into linalool. The chain is Linalool synthase Tps-5042L13, chloroplastic from Perilla frutescens (Beefsteak mint).